A 59-amino-acid polypeptide reads, in one-letter code: UPF0434 protein Noc_2677 (59 aa).

It belongs to the UPF0434 family.

In Nitrosococcus oceani (strain ATCC 19707 / BCRC 17464 / JCM 30415 / NCIMB 11848 / C-107), this protein is UPF0434 protein Noc_2677.